A 108-amino-acid polypeptide reads, in one-letter code: MPPKQQLSKAAKAAAALAGGKKSKKKWSKKSMKDRAQHAVILDQEKYDRILKEVPTYRYVSVSVLVDRLKIGGSLARIALRHLEKEGIIKPISKHSKQAIYTRAAASE.

Residues methionine 1–glycine 20 are compositionally biased toward low complexity. Residues methionine 1–lysine 30 form a disordered region. N,N-dimethylproline; by NTM1 is present on proline 2. Basic residues predominate over residues lysine 21–lysine 30.

It belongs to the eukaryotic ribosomal protein eS25 family. Component of the small ribosomal subunit (SSU). Mature yeast ribosomes consist of a small (40S) and a large (60S) subunit. The 40S small subunit contains 1 molecule of ribosomal RNA (18S rRNA) and 33 different proteins (encoded by 57 genes). The large 60S subunit contains 3 rRNA molecules (25S, 5.8S and 5S rRNA) and 46 different proteins (encoded by 81 genes).

Its subcellular location is the cytoplasm. Component of the ribosome, a large ribonucleoprotein complex responsible for the synthesis of proteins in the cell. The small ribosomal subunit (SSU) binds messenger RNAs (mRNAs) and translates the encoded message by selecting cognate aminoacyl-transfer RNA (tRNA) molecules. The large subunit (LSU) contains the ribosomal catalytic site termed the peptidyl transferase center (PTC), which catalyzes the formation of peptide bonds, thereby polymerizing the amino acids delivered by tRNAs into a polypeptide chain. The nascent polypeptides leave the ribosome through a tunnel in the LSU and interact with protein factors that function in enzymatic processing, targeting, and the membrane insertion of nascent chains at the exit of the ribosomal tunnel. The polypeptide is Small ribosomal subunit protein eS25B (Saccharomyces cerevisiae (strain ATCC 204508 / S288c) (Baker's yeast)).